Consider the following 308-residue polypeptide: Porphobilinogen deaminase (308 aa).

S-(dipyrrolylmethanemethyl)cysteine is present on Cys241.

The protein belongs to the HMBS family. In terms of assembly, monomer. Requires dipyrromethane as cofactor.

It carries out the reaction 4 porphobilinogen + H2O = hydroxymethylbilane + 4 NH4(+). It participates in porphyrin-containing compound metabolism; protoporphyrin-IX biosynthesis; coproporphyrinogen-III from 5-aminolevulinate: step 2/4. In terms of biological role, tetrapolymerization of the monopyrrole PBG into the hydroxymethylbilane pre-uroporphyrinogen in several discrete steps. The chain is Porphobilinogen deaminase from Staphylococcus aureus (strain MRSA252).